Reading from the N-terminus, the 192-residue chain is Ribosome maturation factor RimP (192 aa).

It belongs to the RimP family.

It is found in the cytoplasm. In terms of biological role, required for maturation of 30S ribosomal subunits. This is Ribosome maturation factor RimP from Mycobacterium sp. (strain JLS).